We begin with the raw amino-acid sequence, 219 residues long: Ribosomal RNA large subunit methyltransferase E (219 aa).

S-adenosyl-L-methionine-binding residues include G60, W62, D80, D96, and D120. K160 (proton acceptor) is an active-site residue.

The protein belongs to the class I-like SAM-binding methyltransferase superfamily. RNA methyltransferase RlmE family.

Its subcellular location is the cytoplasm. The enzyme catalyses uridine(2552) in 23S rRNA + S-adenosyl-L-methionine = 2'-O-methyluridine(2552) in 23S rRNA + S-adenosyl-L-homocysteine + H(+). In terms of biological role, specifically methylates the uridine in position 2552 of 23S rRNA at the 2'-O position of the ribose in the fully assembled 50S ribosomal subunit. In Acidithiobacillus ferrooxidans (strain ATCC 23270 / DSM 14882 / CIP 104768 / NCIMB 8455) (Ferrobacillus ferrooxidans (strain ATCC 23270)), this protein is Ribosomal RNA large subunit methyltransferase E.